Consider the following 172-residue polypeptide: Large ribosomal subunit protein uL10 (172 aa).

It belongs to the universal ribosomal protein uL10 family. As to quaternary structure, part of the ribosomal stalk of the 50S ribosomal subunit. The N-terminus interacts with L11 and the large rRNA to form the base of the stalk. The C-terminus forms an elongated spine to which L12 dimers bind in a sequential fashion forming a multimeric L10(L12)X complex.

In terms of biological role, forms part of the ribosomal stalk, playing a central role in the interaction of the ribosome with GTP-bound translation factors. This Rhodopseudomonas palustris (strain HaA2) protein is Large ribosomal subunit protein uL10.